The chain runs to 171 residues: Transcription factor E (171 aa).

In terms of domain architecture, HTH TFE/IIEalpha-type spans Tyr5 to Glu88.

This sequence belongs to the TFE family. As to quaternary structure, monomer. Interaction with RNA polymerase subunits RpoF and RpoE is necessary for Tfe stimulatory transcription activity. Able to interact with Tbp and RNA polymerase in the absence of DNA promoter. Interacts both with the preinitiation and elongation complexes.

Transcription factor that plays a role in the activation of archaeal genes transcribed by RNA polymerase. Facilitates transcription initiation by enhancing TATA-box recognition by TATA-box-binding protein (Tbp), and transcription factor B (Tfb) and RNA polymerase recruitment. Not absolutely required for transcription in vitro, but particularly important in cases where Tbp or Tfb function is not optimal. It dynamically alters the nucleic acid-binding properties of RNA polymerases by stabilizing the initiation complex and destabilizing elongation complexes. Seems to translocate with the RNA polymerase following initiation and acts by binding to the non template strand of the transcription bubble in elongation complexes. In Cenarchaeum symbiosum (strain A), this protein is Transcription factor E.